Here is a 222-residue protein sequence, read N- to C-terminus: MALDIKICGLKTPEAVAAALDGGATHIGFIFFPKSPRHITPDAAARLRAAATGRAVAVAVTVDADDEALDEIVKTVRPDMLQLHGGETPERVRFLKERYNLPVMKAFSIREAGDLEAIAPYRGIADRFLFDAKPPKGSELPGGNGISFDWNLLAALDADIDYMLSGGLNADNIAEALLKTGAPGIDISSGVECAPGEKDVRLIENFFQAVADANAQPFARRA.

The protein belongs to the TrpF family.

It catalyses the reaction N-(5-phospho-beta-D-ribosyl)anthranilate = 1-(2-carboxyphenylamino)-1-deoxy-D-ribulose 5-phosphate. The protein operates within amino-acid biosynthesis; L-tryptophan biosynthesis; L-tryptophan from chorismate: step 3/5. The polypeptide is N-(5'-phosphoribosyl)anthranilate isomerase (Brucella abortus (strain S19)).